We begin with the raw amino-acid sequence, 954 residues long: Glycine dehydrogenase (decarboxylating) (954 aa).

Positions 1–13 are enriched in polar residues; that stretch reads MTELLQSLSTQNE. The disordered stretch occupies residues 1–24; the sequence is MTELLQSLSTQNEFVARHNGPNKS. Residue K704 is modified to N6-(pyridoxal phosphate)lysine.

Belongs to the GcvP family. The glycine cleavage system is composed of four proteins: P, T, L and H. Pyridoxal 5'-phosphate is required as a cofactor.

The enzyme catalyses N(6)-[(R)-lipoyl]-L-lysyl-[glycine-cleavage complex H protein] + glycine + H(+) = N(6)-[(R)-S(8)-aminomethyldihydrolipoyl]-L-lysyl-[glycine-cleavage complex H protein] + CO2. Its function is as follows. The glycine cleavage system catalyzes the degradation of glycine. The P protein binds the alpha-amino group of glycine through its pyridoxal phosphate cofactor; CO(2) is released and the remaining methylamine moiety is then transferred to the lipoamide cofactor of the H protein. The sequence is that of Glycine dehydrogenase (decarboxylating) from Vibrio campbellii (strain ATCC BAA-1116).